Here is a 419-residue protein sequence, read N- to C-terminus: Multifunctional CCA protein (419 aa).

ATP contacts are provided by Gly-8 and Arg-11. CTP-binding residues include Gly-8 and Arg-11. Mg(2+) is bound by residues Asp-21 and Asp-23. Residues Arg-91, Arg-149, and Arg-152 each coordinate ATP. CTP-binding residues include Arg-91, Arg-149, and Arg-152. One can recognise an HD domain in the interval 238–339 (CGVHLMMVID…VRLLERCDAF (102 aa)).

The protein belongs to the tRNA nucleotidyltransferase/poly(A) polymerase family. Bacterial CCA-adding enzyme type 1 subfamily. In terms of assembly, monomer. Can also form homodimers and oligomers. It depends on Mg(2+) as a cofactor. Ni(2+) is required as a cofactor.

It carries out the reaction a tRNA precursor + 2 CTP + ATP = a tRNA with a 3' CCA end + 3 diphosphate. The enzyme catalyses a tRNA with a 3' CCA end + 2 CTP + ATP = a tRNA with a 3' CCACCA end + 3 diphosphate. Its function is as follows. Catalyzes the addition and repair of the essential 3'-terminal CCA sequence in tRNAs without using a nucleic acid template. Adds these three nucleotides in the order of C, C, and A to the tRNA nucleotide-73, using CTP and ATP as substrates and producing inorganic pyrophosphate. tRNA 3'-terminal CCA addition is required both for tRNA processing and repair. Also involved in tRNA surveillance by mediating tandem CCA addition to generate a CCACCA at the 3' terminus of unstable tRNAs. While stable tRNAs receive only 3'-terminal CCA, unstable tRNAs are marked with CCACCA and rapidly degraded. The sequence is that of Multifunctional CCA protein from Variovorax paradoxus (strain S110).